A 383-amino-acid polypeptide reads, in one-letter code: Glucose-1-phosphate adenylyltransferase (383 aa).

Alpha-D-glucose 1-phosphate contacts are provided by residues Tyr-100, Gly-165, 180–181 (EK), and Ser-191.

The protein belongs to the bacterial/plant glucose-1-phosphate adenylyltransferase family. Homotetramer.

The catalysed reaction is alpha-D-glucose 1-phosphate + ATP + H(+) = ADP-alpha-D-glucose + diphosphate. The protein operates within glycan biosynthesis; glycogen biosynthesis. In terms of biological role, involved in the biosynthesis of ADP-glucose, a building block required for the elongation reactions to produce glycogen. Catalyzes the reaction between ATP and alpha-D-glucose 1-phosphate (G1P) to produce pyrophosphate and ADP-Glc. This Clostridium kluyveri (strain ATCC 8527 / DSM 555 / NBRC 12016 / NCIMB 10680 / K1) protein is Glucose-1-phosphate adenylyltransferase.